Here is a 227-residue protein sequence, read N- to C-terminus: Small ribosomal subunit protein uS3 (227 aa).

The KH type-2 domain occupies V39–R107.

This sequence belongs to the universal ribosomal protein uS3 family. Part of the 30S ribosomal subunit. Forms a tight complex with proteins S10 and S14.

In terms of biological role, binds the lower part of the 30S subunit head. Binds mRNA in the 70S ribosome, positioning it for translation. This Hahella chejuensis (strain KCTC 2396) protein is Small ribosomal subunit protein uS3.